Here is a 502-residue protein sequence, read N- to C-terminus: TGF-beta-activated kinase 1 and MAP3K7-binding protein 1 (502 aa).

The segment at 1–21 (MAAQRRSLLQSEQQPSWTDDL) is disordered. Phosphoserine is present on Ser-7. Residues 7–17 (SLLQSEQQPSW) are compositionally biased toward polar residues. One can recognise a PPM-type phosphatase domain in the interval 28-365 (GVGSASNRSY…EDMTLLVRNF (338 aa)). Residue Ser-393 is glycosylated (O-linked (GlcNAc) serine). Positions 414–437 (QMVNGSHSASTLDEATPTLTNQSP) are enriched in polar residues. The disordered stretch occupies residues 414–476 (QMVNGSHSAS…SLPPGEDGRV (63 aa)). Ser-421 bears the Phosphoserine mark. Position 429 is a phosphothreonine (Thr-429). Ser-436 bears the Phosphoserine mark. Residues 438–455 (TLTLQSTNTHTQSSSSSS) are compositionally biased toward low complexity. A Phosphothreonine modification is found at Thr-440.

Interacts with XIAP and BIRC7. Interacts with TRAF6 and MAP3K7; during IL-1 signaling. Identified in the TRIKA2 complex composed of MAP3K7, TAB1 and TAB2. Interacts with TRAF6 and MAPK14; these interactions allow MAPK14 autophosphorylation. Interacts with STING1; interaction takes place following cGAMP activation and promotes TAB1 recruitment to the endoplasmic reticulum, triggering MAP3K7/TAK1 activation and STING1 phosphorylation. Post-translationally, phosphorylated at all three sites Ser-421, Thr-429 and Ser-436 by MAPK14 when cells were exposed to cellular stresses, or stimulated with TNF-alpha, IL1 or LPS. These phosphorylations inhibit TAK1 activation by a feedback control mechanism. Dephosphorylated by DUSP14 at Ser-436, leading to TAB1-MAP3K7/TAK1 complex inactivation in T-cells. In terms of processing, ubiquitinated by MAP3K1 with 'Lys-63'-linked polyubiquitin; leading to activation of TAK1 and of JNK and p38 MAP kinases following EGF and TGF-beta stimulation. Ubiquitinated by ITCH with 'Lys-48'-linked polyubiquitin; leading to proteasomal degradation. Ubiquitinated by RNF114 during maternal-to-zygotic transition; leading to degradation. O-GlcNAcylated at Ser-393 is required for full MAP3K7/TAK1 activation upon stimulation with IL-1 or osmotic stress.

The protein resides in the cytoplasm. It localises to the cytosol. The protein localises to the endoplasmic reticulum membrane. Key adapter protein that plays an essential role in JNK and NF-kappa-B activation and proinflammatory cytokines production in response to stimulation with TLRs and cytokines. Mechanistically, associates with the catalytic domain of MAP3K7/TAK1 to trigger MAP3K7/TAK1 autophosphorylation leading to its full activation. Similarly, associates with MAPK14 and triggers its autophosphorylation and subsequent activation. In turn, MAPK14 phosphorylates TAB1 and inhibits MAP3K7/TAK1 activation in a feedback control mechanism. Also plays a role in recruiting MAPK14 to the TAK1 complex for the phosphorylation of the TAB2 and TAB3 regulatory subunits. This is TGF-beta-activated kinase 1 and MAP3K7-binding protein 1 (Tab1) from Mus musculus (Mouse).